The sequence spans 132 residues: Small ribosomal subunit protein uS11 (132 aa).

A compositionally biased stretch (basic residues) spans 1–16 (MAAGMKGKRSRRRKER). Residues 1-20 (MAAGMKGKRSRRRKERKNVE) form a disordered region.

The protein belongs to the universal ribosomal protein uS11 family. In terms of assembly, part of the 30S ribosomal subunit. Interacts with proteins S7 and S18. Binds to IF-3.

Functionally, located on the platform of the 30S subunit, it bridges several disparate RNA helices of the 16S rRNA. Forms part of the Shine-Dalgarno cleft in the 70S ribosome. This chain is Small ribosomal subunit protein uS11, found in Clostridium botulinum (strain Hall / ATCC 3502 / NCTC 13319 / Type A).